Reading from the N-terminus, the 611-residue chain is MAASAKKKNKKGKTISLTDFLAEDGGTGGGSTYVSKPVSWADETDDLEGDVSTTWHSNDDDVYRAPPIDRSILPTAPRAAREPNIDRSRLPKSPPYTAFLGNLPYDVTEESIKEFFRGLNISAVRLPREPSNPERLKGFGYAEFEDLDSLLSALSLNEESLGNRRIRVDVADQAQDKDRDDRSFGRDRNRDSDKTDTDWRARPATDSFDDYPPRRGDDSFGDKYRDRYDSDRYRDGYRDGYRDGPRRDMDRYGGRDRYDDRGSRDYDRGYDSRIGSGRRAFGSGYRRDDDYRGGGDRYEDRYDRRDDRSWSSRDDYSRDDYRRDDRGPPQRPKLNLKPRSTPKEDDSSASTSQSTRAASIFGGAKPVDTAAREREVEERLQKEQEKLQRQLDEPKLERRPRERHPSWRSEETQERERSRTGSESSQTGTSTTSSRNARRRESEKSLENETLNKEEDCHSPTSKPPKPDQPLKVMPAPPPKENAWVKRSSNPPARSQSSDTEQQSPTSGGGKVAPAQPSEEGPGRKDENKVDGMNAPKGQTGNSSRGPGDGGNRDHWKESDRKDGKKDQDSRSAPEPKKPEENPASKFSSASKYAALSVDGEDENEGEDYAE.

The span at 1-13 (MAASAKKKNKKGK) shows a compositional bias: basic residues. Disordered stretches follow at residues 1-37 (MAAS…VSKP), 66-93 (PPID…LPKS), and 173-611 (QAQD…DYAE). The segment covering 79–89 (AAREPNIDRSR) has biased composition (basic and acidic residues). At Ser-93 the chain carries Phosphoserine. The 78-residue stretch at 96-173 (YTAFLGNLPY…RRIRVDVADQ (78 aa)) folds into the RRM domain. Over residues 173–203 (QAQDKDRDDRSFGRDRNRDSDKTDTDWRARP) the composition is skewed to basic and acidic residues. A phosphoserine mark is found at Ser-192, Ser-207, Ser-219, and Ser-283. The segment covering 211–271 (YPPRRGDDSF…GSRDYDRGYD (61 aa)) has biased composition (basic and acidic residues). Over residues 285–328 (YRRDDDYRGGGDRYEDRYDRRDDRSWSSRDDYSRDDYRRDDRGP) the composition is skewed to basic and acidic residues. A Glycyl lysine isopeptide (Lys-Gly) (interchain with G-Cter in SUMO2) cross-link involves residue Lys-343. Low complexity predominate over residues 348–359 (SASTSQSTRAAS). Phosphoserine is present on Ser-359. Lys-365 bears the N6-acetyllysine mark. Over residues 370–420 (AAREREVEERLQKEQEKLQRQLDEPKLERRPRERHPSWRSEETQERERSRT) the composition is skewed to basic and acidic residues. At Ser-406 the chain carries Phosphoserine; by RPS6KA1. Ser-409 is modified (phosphoserine). At Thr-412 the chain carries Phosphothreonine. Residue Ser-418 is modified to Phosphoserine. A compositionally biased stretch (low complexity) spans 421–435 (GSESSQTGTSTTSSR). Ser-422 carries the post-translational modification Phosphoserine; by RPS6KA1 and RPS6KB1. Phosphoserine is present on residues Ser-425, Ser-445, Ser-459, Ser-462, Ser-497, and Ser-498. The segment covering 439–458 (RRESEKSLENETLNKEEDCH) has biased composition (basic and acidic residues). Polar residues predominate over residues 487 to 506 (RSSNPPARSQSSDTEQQSPT). Thr-500 carries the phosphothreonine modification. Ser-504 bears the Phosphoserine mark. At Thr-506 the chain carries Phosphothreonine. 2 stretches are compositionally biased toward basic and acidic residues: residues 521–530 (GPGRKDENKV) and 551–583 (GNRD…EENP). The span at 584 to 597 (ASKFSSASKYAALS) shows a compositional bias: low complexity. An N6-acetyllysine modification is found at Lys-586. Phosphoserine is present on Ser-597. The segment covering 599 to 611 (DGEDENEGEDYAE) has biased composition (acidic residues).

Self-associates and interacts with EIF3 p170 subunit. In terms of processing, phosphorylated at Ser-422 by RPS6KA1 and RPS6KB1; phosphorylation enhances the affinity of EIF4B for the EIF3 complex. In response to mTORC1 activation, RPS6KA1-mediated phosphorylation at 'Ser-406' and 'Ser-422' stimulates bicarbonate cotransporter SLC4A7 mRNA translation, increasing SLC4A7 protein abundance and function.

Required for the binding of mRNA to ribosomes. Functions in close association with EIF4-F and EIF4-A. Binds near the 5'-terminal cap of mRNA in presence of EIF-4F and ATP. Promotes the ATPase activity and the ATP-dependent RNA unwinding activity of both EIF4-A and EIF4-F. This is Eukaryotic translation initiation factor 4B (EIF4B) from Homo sapiens (Human).